The following is a 144-amino-acid chain: Gas vesicle protein I1 (144 aa).

A disordered region spans residues 1-144 (MSDKQQQKHK…SPTEDEVNDE (144 aa)). Composition is skewed to basic residues over residues 7-17 (QKHKQKARQAR) and 26-46 (KARR…TRNR). The span at 75-94 (MPPQKSNAENAVRNSHSTVP) shows a compositional bias: polar residues. Over residues 122-136 (SEASAPSDESASGSP) the composition is skewed to low complexity.

This sequence belongs to the gas vesicle GvpI family. GvpF to GvpM interact with each other in vitro, and may form multi-subunit complex(es). Interacts with GvpC1 and GvpO.

The protein localises to the gas vesicle. Functionally, proteins GvpF to GvpM might be involved in nucleating gas vesicle formation. A minor component of the gas vesicle. Gas vesicles are hollow, gas filled proteinaceous nanostructures found in several microbial planktonic microorganisms. They allow positioning of halobacteria at the optimal depth for growth in the poorly aerated, shallow brine pools of their habitat. In terms of biological role, expression of a 9.5 kb p-vac DNA fragment containing 2 divergently transcribed regions (gvpD-gvpE-gvpF-gvpG-gvpH-gvpI-gvpJ-gvpK-gvpL-gvpM and gvpA-gvpC-gvpN-gvpO) allows H.volcanii to produce gas vesicles. A similar region restores gas vesicle production in H.halobium without the p-vac locus, but it still has the c-vac locus. The chain is Gas vesicle protein I1 (gvpI11) from Halobacterium salinarum (strain ATCC 700922 / JCM 11081 / NRC-1) (Halobacterium halobium).